A 133-amino-acid polypeptide reads, in one-letter code: Large ribosomal subunit protein bL17 (133 aa).

Belongs to the bacterial ribosomal protein bL17 family. In terms of assembly, part of the 50S ribosomal subunit. Contacts protein L32.

The chain is Large ribosomal subunit protein bL17 from Idiomarina loihiensis (strain ATCC BAA-735 / DSM 15497 / L2-TR).